Consider the following 68-residue polypeptide: Phycobilisome 7.8 kDa linker polypeptide, allophycocyanin-associated, core (68 aa).

The CpcD-like domain maps to 2–57 (ARLFKVTACVPSQTRIRTQRELQNTYFTKLVPFENWFREQQRIMKMGGKIVKVELA).

It belongs to the phycobilisome linker protein family.

The protein localises to the cellular thylakoid membrane. In terms of biological role, rod linker protein, associated with allophycocyanin. Linker polypeptides determine the state of aggregation and the location of the disk-shaped phycobiliprotein units within the phycobilisome and modulate their spectroscopic properties in order to mediate a directed and optimal energy transfer. This is Phycobilisome 7.8 kDa linker polypeptide, allophycocyanin-associated, core (apcC) from Microchaete diplosiphon (Fremyella diplosiphon).